The following is a 133-amino-acid chain: Profilin (133 aa).

The protein belongs to the profilin family.

Its function is as follows. More likely to influence phosphoinositide metabolism than actin assembly. The protein is Profilin of Cowpox virus (strain GRI-90 / Grishak) (CPV).